A 335-amino-acid polypeptide reads, in one-letter code: Mitochondrial carrier protein CoAc2 (335 aa).

A run of 6 helical transmembrane segments spans residues 12–32 (SGPG…AGGV), 75–95 (FYRG…LHYM), 119–139 (LVAG…LDLV), 187–207 (GMAP…YFYE), 225–242 (LGCG…TYPL), and 280–302 (LFSG…FTVY). 3 Solcar repeats span residues 17 to 103 (PLAV…YRRW), 113 to 212 (QGPV…MKSH), and 219 to 308 (KGII…MKVC).

Belongs to the mitochondrial carrier (TC 2.A.29) family. Expressed throughout the plant.

The protein resides in the mitochondrion inner membrane. Required for the accumulation of coenzyme A in the mitochondrial matrix. The sequence is that of Mitochondrial carrier protein CoAc2 from Zea mays (Maize).